The sequence spans 253 residues: Imidazole glycerol phosphate synthase subunit HisF (253 aa).

Residues aspartate 11 and aspartate 130 contribute to the active site.

This sequence belongs to the HisA/HisF family. Heterodimer of HisH and HisF.

The protein localises to the cytoplasm. It catalyses the reaction 5-[(5-phospho-1-deoxy-D-ribulos-1-ylimino)methylamino]-1-(5-phospho-beta-D-ribosyl)imidazole-4-carboxamide + L-glutamine = D-erythro-1-(imidazol-4-yl)glycerol 3-phosphate + 5-amino-1-(5-phospho-beta-D-ribosyl)imidazole-4-carboxamide + L-glutamate + H(+). Its pathway is amino-acid biosynthesis; L-histidine biosynthesis; L-histidine from 5-phospho-alpha-D-ribose 1-diphosphate: step 5/9. Its function is as follows. IGPS catalyzes the conversion of PRFAR and glutamine to IGP, AICAR and glutamate. The HisF subunit catalyzes the cyclization activity that produces IGP and AICAR from PRFAR using the ammonia provided by the HisH subunit. This chain is Imidazole glycerol phosphate synthase subunit HisF, found in Ruminiclostridium cellulolyticum (strain ATCC 35319 / DSM 5812 / JCM 6584 / H10) (Clostridium cellulolyticum).